The sequence spans 138 residues: Venom allergen 2 (138 aa).

Positions 1–19 (MKSFVLATCLLGFAQIIYA) are cleaved as a signal peptide. 3 cysteine pairs are disulfide-bonded: C34/C57, C81/C94, and C101/C122.

Belongs to the ant venom allergen 2/4 family. In terms of assembly, homodimer; disulfide-linked. Expressed by the venom gland.

Its subcellular location is the secreted. This is Venom allergen 2 from Solenopsis invicta (Red imported fire ant).